The sequence spans 594 residues: Choline dehydrogenase, mitochondrial (594 aa).

The N-terminal 29 residues, 1–29 (MWCLLRGLGRPGALARGALGQQQSLGARA), are a transit peptide targeting the mitochondrion. 42–71 (SYVVVGAGSAGCVLAGRLTEDPAERVLLLE) is an FAD binding site. At K436 the chain carries N6-succinyllysine. An N6-acetyllysine; alternate mark is found at K484 and K496. K484 and K496 each carry N6-succinyllysine; alternate. The active-site Proton acceptor is H511. An N6-acetyllysine modification is found at K580.

Belongs to the GMC oxidoreductase family. Requires FAD as cofactor.

It is found in the mitochondrion inner membrane. The enzyme catalyses choline + A = betaine aldehyde + AH2. It participates in amine and polyamine biosynthesis; betaine biosynthesis via choline pathway; betaine aldehyde from choline (cytochrome c reductase route): step 1/1. The chain is Choline dehydrogenase, mitochondrial (CHDH) from Homo sapiens (Human).